The sequence spans 861 residues: Leucine--tRNA ligase (861 aa).

The short motif at 42–52 is the 'HIGH' region element; that stretch reads PYPSGKLHMGH. The 'KMSKS' region motif lies at 620-624; sequence KMSKS. Residue Lys623 participates in ATP binding.

This sequence belongs to the class-I aminoacyl-tRNA synthetase family.

The protein localises to the cytoplasm. The enzyme catalyses tRNA(Leu) + L-leucine + ATP = L-leucyl-tRNA(Leu) + AMP + diphosphate. The sequence is that of Leucine--tRNA ligase from Marinobacter nauticus (strain ATCC 700491 / DSM 11845 / VT8) (Marinobacter aquaeolei).